The sequence spans 183 residues: Archaemetzincin (183 aa).

Zn(2+) is bound at residue His131. Glu132 acts as the Proton acceptor in catalysis. 6 residues coordinate Zn(2+): His135, His141, Cys142, Cys147, Cys166, and Cys169.

The protein belongs to the peptidase M54 family. In terms of assembly, monomer. The cofactor is Zn(2+).

Its function is as follows. Probable zinc metalloprotease whose natural substrate is unknown. The chain is Archaemetzincin from Saccharolobus islandicus (strain Y.N.15.51 / Yellowstone #2) (Sulfolobus islandicus).